The sequence spans 318 residues: MYNYNYSRGNKSMGNPPRFHELTDMPDNGASTSAAAGMFTRQDSLALAASLQQRDRERNPVDFMETQLDLDNYLQCFTDLDVPADNVDLNDAELQKANILYDDDSYEQPQLNPYERHVAYGPGFRNPGEYEEQDGYKMNFEVKTEEEKKPETMKTSKTMTTRRAIKRPSCYDDYQEEGETSLSDNDESVDDSYYKPKSSKKTAAAVPNFVPKTKARKYNLKPDKEKVEPIYKLKRARNNDAVRKSRNKAKELQLQKDEEYDEMKKRITQLEAELQSEREGRERDQQLIKQLIREKESTSKGPRKSSRNALESFNKSNY.

A compositionally biased stretch (polar residues) spans 1 to 13 (MYNYNYSRGNKSM). 4 disordered regions span residues 1–20 (MYNY…PRFH), 147–205 (EKKP…TAAA), 238–257 (NNDA…LQKD), and 273–318 (ELQS…KSNY). A compositionally biased stretch (acidic residues) spans 173–190 (DYQEEGETSLSDNDESVD). The bZIP domain occupies 228 to 291 (EPIYKLKRAR…ERDQQLIKQL (64 aa)). The segment at 232–266 (KLKRARNNDAVRKSRNKAKELQLQKDEEYDEMKKR) is basic motif. Residues 242 to 280 (VRKSRNKAKELQLQKDEEYDEMKKRITQLEAELQSEREG) are a coiled coil. Residues 267 to 274 (ITQLEAEL) form a leucine-zipper region. The span at 275-298 (QSEREGRERDQQLIKQLIREKEST) shows a compositional bias: basic and acidic residues. Positions 307-318 (RNALESFNKSNY) are enriched in polar residues.

This sequence belongs to the bZIP family. C/EBP subfamily.

The protein resides in the nucleus. Functionally, transcription factor that binds to the promoter and the enhancer regions of target genes. Involved in responding to mitochondrial damage. Has a protective role in response to infection by the Gram-negative bacterium P.aeruginosa. The polypeptide is Transcription factor zip-4 (Caenorhabditis elegans).